A 167-amino-acid chain; its full sequence is MNNIAPQSPVMRRLTLQDNPAIARVIRQVSAEYGLTADKGYTVADPNLDELYQVYSQPGHAYWVVEYEGEVVGGGGIAPLTGSESDICELQKMYFLPAIRGKGLAKKLALMAMEQAREMGFKRCYLETTAFLKEAIALYEHLGFEHIDYALGCTGHVDCEVRMLREL.

One can recognise an N-acetyltransferase domain in the interval 9-167 (PVMRRLTLQD…DCEVRMLREL (159 aa)).

Belongs to the acetyltransferase family.

This is an uncharacterized protein from Escherichia coli (strain K12).